Reading from the N-terminus, the 34-residue chain is Small, acid-soluble spore protein M (34 aa).

Basic residues predominate over residues 1-10 (MKTRPKKAGQ). Residues 1-34 (MKTRPKKAGQQKKTESKAIDSLDKKLGGPNRPST) are disordered. The segment covering 12 to 26 (KKTESKAIDSLDKKL) has biased composition (basic and acidic residues).

The protein resides in the spore core. The sequence is that of Small, acid-soluble spore protein M (sspM) from Bacillus subtilis (strain 168).